The sequence spans 97 residues: Large ribosomal subunit protein eL21 (97 aa).

The protein belongs to the eukaryotic ribosomal protein eL21 family.

The chain is Large ribosomal subunit protein eL21 from Methanoculleus marisnigri (strain ATCC 35101 / DSM 1498 / JR1).